A 235-amino-acid chain; its full sequence is tRNA (guanine-N(1)-)-methyltransferase (235 aa).

Residues Gly112 and 132–137 (LGDFVL) contribute to the S-adenosyl-L-methionine site.

It belongs to the RNA methyltransferase TrmD family. Homodimer.

Its subcellular location is the cytoplasm. The catalysed reaction is guanosine(37) in tRNA + S-adenosyl-L-methionine = N(1)-methylguanosine(37) in tRNA + S-adenosyl-L-homocysteine + H(+). Specifically methylates guanosine-37 in various tRNAs. The chain is tRNA (guanine-N(1)-)-methyltransferase from Acaryochloris marina (strain MBIC 11017).